The following is a 241-amino-acid chain: Probable pectate lyase D (241 aa).

The N-terminal stretch at 1–17 (MYQKSLLFSLLATSALA) is a signal peptide. N-linked (GlcNAc...) asparagine glycosylation is present at Asn-215. A disordered region spans residues 215-241 (NNSGDEPEEVSEGPSDACQYSEPLSSC).

Belongs to the polysaccharide lyase 3 family. The cofactor is Ca(2+).

The protein localises to the secreted. It carries out the reaction Eliminative cleavage of (1-&gt;4)-alpha-D-galacturonan to give oligosaccharides with 4-deoxy-alpha-D-galact-4-enuronosyl groups at their non-reducing ends.. Its function is as follows. Pectinolytic enzyme consist of four classes of enzymes: pectin lyase, polygalacturonase, pectin methylesterase and rhamnogalacturonase. Among pectinolytic enzymes, pectin lyase is the most important in depolymerization of pectin, since it cleaves internal glycosidic bonds of highly methylated pectins. Favors pectate, the anion, over pectin, the methyl ester. This chain is Probable pectate lyase D (plyD), found in Neosartorya fischeri (strain ATCC 1020 / DSM 3700 / CBS 544.65 / FGSC A1164 / JCM 1740 / NRRL 181 / WB 181) (Aspergillus fischerianus).